Reading from the N-terminus, the 428-residue chain is 5'-nucleotidase domain-containing protein 4 (428 aa).

The active-site Nucleophile is the Asp22. Residues Asp22, Asp24, and Asp317 each coordinate Mg(2+). Asp24 (proton donor) is an active-site residue.

It belongs to the 5'(3')-deoxyribonucleotidase family.

The sequence is that of 5'-nucleotidase domain-containing protein 4 (NT5DC4) from Homo sapiens (Human).